Consider the following 1390-residue polypeptide: DNA-directed RNA polymerase subunit beta (1390 aa).

This sequence belongs to the RNA polymerase beta chain family. As to quaternary structure, the RNAP catalytic core consists of 2 alpha, 1 beta, 1 beta' and 1 omega subunit. When a sigma factor is associated with the core the holoenzyme is formed, which can initiate transcription.

The catalysed reaction is RNA(n) + a ribonucleoside 5'-triphosphate = RNA(n+1) + diphosphate. In terms of biological role, DNA-dependent RNA polymerase catalyzes the transcription of DNA into RNA using the four ribonucleoside triphosphates as substrates. The chain is DNA-directed RNA polymerase subunit beta from Mycoplasma genitalium (strain ATCC 33530 / DSM 19775 / NCTC 10195 / G37) (Mycoplasmoides genitalium).